We begin with the raw amino-acid sequence, 201 residues long: Prostamide/prostaglandin F synthase (201 aa).

The protein belongs to the peroxiredoxin-like PRXL2 family. Prostamide/prostaglandin F synthase subfamily.

The protein resides in the cytoplasm. The protein localises to the cytosol. It carries out the reaction prostaglandin H2 + [thioredoxin]-dithiol = prostaglandin F2alpha + [thioredoxin]-disulfide. The enzyme catalyses prostamide F2alpha + [thioredoxin]-disulfide = prostamide H2 + [thioredoxin]-dithiol. Its function is as follows. Catalyzes the reduction of prostaglandin-ethanolamide H(2) (prostamide H(2)) to prostamide F(2alpha) with NADPH as proton donor. Also able to reduce prostaglandin H(2) to prostaglandin F(2alpha). In Xenopus tropicalis (Western clawed frog), this protein is Prostamide/prostaglandin F synthase (prxl2b).